The primary structure comprises 528 residues: Probable rhamnogalacturonate lyase A (528 aa).

An N-terminal signal peptide occupies residues 1 to 20 (MLSKATLLLSLPFWARVANA). N46 carries an N-linked (GlcNAc...) asparagine glycan. Disulfide bonds link C50-C93 and C184-C193. N351 is a glycosylation site (N-linked (GlcNAc...) asparagine).

The protein belongs to the polysaccharide lyase 4 family.

Its subcellular location is the secreted. The catalysed reaction is Endotype eliminative cleavage of L-alpha-rhamnopyranosyl-(1-&gt;4)-alpha-D-galactopyranosyluronic acid bonds of rhamnogalacturonan I domains in ramified hairy regions of pectin leaving L-rhamnopyranose at the reducing end and 4-deoxy-4,5-unsaturated D-galactopyranosyluronic acid at the non-reducing end.. In terms of biological role, pectinolytic enzymes consist of four classes of enzymes: pectin lyase, polygalacturonase, pectin methylesterase and rhamnogalacturonase. Degrades the rhamnogalacturonan I (RG-I) backbone of pectin. This chain is Probable rhamnogalacturonate lyase A (rglA), found in Neosartorya fischeri (strain ATCC 1020 / DSM 3700 / CBS 544.65 / FGSC A1164 / JCM 1740 / NRRL 181 / WB 181) (Aspergillus fischerianus).